Consider the following 424-residue polypeptide: UDP-N-acetylglucosamine 1-carboxyvinyltransferase (424 aa).

Position 22-23 (22-23 (KN)) interacts with phosphoenolpyruvate. UDP-N-acetyl-alpha-D-glucosamine is bound at residue R98. Catalysis depends on C122, which acts as the Proton donor. C122 bears the 2-(S-cysteinyl)pyruvic acid O-phosphothioketal mark. UDP-N-acetyl-alpha-D-glucosamine-binding positions include 127–131 (RPVDQ), D312, and I334.

Belongs to the EPSP synthase family. MurA subfamily.

The protein resides in the cytoplasm. The enzyme catalyses phosphoenolpyruvate + UDP-N-acetyl-alpha-D-glucosamine = UDP-N-acetyl-3-O-(1-carboxyvinyl)-alpha-D-glucosamine + phosphate. Its pathway is cell wall biogenesis; peptidoglycan biosynthesis. Functionally, cell wall formation. Adds enolpyruvyl to UDP-N-acetylglucosamine. This Xanthomonas oryzae pv. oryzae (strain MAFF 311018) protein is UDP-N-acetylglucosamine 1-carboxyvinyltransferase.